Reading from the N-terminus, the 577-residue chain is Methionine--tRNA ligase (577 aa).

The 'HIGH' region motif lies at 21 to 31 (PYANGPLHVGH). Zn(2+) contacts are provided by cysteine 153, cysteine 156, cysteine 166, and cysteine 169. The 'KMSKS' region motif lies at 355 to 359 (QMSTS). Threonine 358 lines the ATP pocket.

Belongs to the class-I aminoacyl-tRNA synthetase family. MetG type 1 subfamily. Monomer. Zn(2+) serves as cofactor.

It is found in the cytoplasm. The catalysed reaction is tRNA(Met) + L-methionine + ATP = L-methionyl-tRNA(Met) + AMP + diphosphate. In terms of biological role, is required not only for elongation of protein synthesis but also for the initiation of all mRNA translation through initiator tRNA(fMet) aminoacylation. The sequence is that of Methionine--tRNA ligase from Rubrobacter xylanophilus (strain DSM 9941 / JCM 11954 / NBRC 16129 / PRD-1).